The sequence spans 299 residues: ClpXP adapter protein SpxH (299 aa).

It belongs to the SpxH family. As to quaternary structure, interacts with Spx. Interacts with SpxO/YuzO.

It localises to the cytoplasm. Its activity is regulated as follows. Irreversible aggregation upon several stress conditions prevents interaction with Spx and therefore leads to Spx stabilization. Inhibited by interaction with SpxO/YuzO. In terms of biological role, adapter protein required for efficient degradation of Spx by ClpXP under non-stress conditions. Interaction with Spx stabilizes Spx and exposes the C-terminus of Spx for recognition and proteolysis by ClpXP. Is specific for Spx and does not enhance proteolysis by ClpCP protease. Probably binds 2 zinc ions. The sequence is that of ClpXP adapter protein SpxH from Bacillus subtilis (strain 168).